Reading from the N-terminus, the 368-residue chain is DNA replication and repair protein RecF (368 aa).

30 to 37 (GRNGSGKT) contacts ATP.

Belongs to the RecF family.

It is found in the cytoplasm. In terms of biological role, the RecF protein is involved in DNA metabolism; it is required for DNA replication and normal SOS inducibility. RecF binds preferentially to single-stranded, linear DNA. It also seems to bind ATP. This is DNA replication and repair protein RecF from Chlorobaculum tepidum (strain ATCC 49652 / DSM 12025 / NBRC 103806 / TLS) (Chlorobium tepidum).